The chain runs to 339 residues: Protein FAM50A (339 aa).

The segment at 1–31 (MAQYKGAASEAGRAMHLMKKREKQREQMEQM) is disordered. Ala2 carries the post-translational modification N-acetylalanine. Lys100 participates in a covalent cross-link: Glycyl lysine isopeptide (Lys-Gly) (interchain with G-Cter in SUMO2). Residues 121 to 177 (SFTLEEEEEGGEEEEEAAMYEEEMEREEITTKKRKLGKNPDVDTSFLPDRDREEEEN) form a disordered region. Residues 124–146 (LEEEEEGGEEEEEAAMYEEEMER) are compositionally biased toward acidic residues. Residues 152–155 (KKRK) carry the Nuclear localization signal motif. The span at 168 to 177 (PDRDREEEEN) shows a compositional bias: basic and acidic residues.

It belongs to the FAM50 family. Interacts with EFTUD2, a component of the spliceosome U5 complex. Interacts with DDX41, a component of the spliceosome C complex. Widely expressed in fetal and adult tissues. Mostly abundant in fetal brain, liver and kidney; in the adult, high levels were also observed in heart, skeletal muscle, spleen, thymus, prostate and small intestine. Expressed in fetal cerebellum and hypothalamus. Low expression is observed in fetal temporal lobe.

The protein localises to the nucleus. Probably involved in the regulation of pre-mRNA splicing. In Homo sapiens (Human), this protein is Protein FAM50A (FAM50A).